A 482-amino-acid polypeptide reads, in one-letter code: MPTATNVENGRITQVIGPVVDVEFPPGTLPDIYTALKVTNPGVDERQDNLVIEVAQHLGENTARCIAMDSTEGLVRGMPVKNTGAPISVPVGQEVLGRILNVVGEPVDERGPVAATKTLPIHRSAPLLTDLNVKVESFETGIKVIDLLAPYLRGGKIGLFGGAGVGKTVLLMELVNNVAKKRGGFSVFGGVGERTREGNDLYHEMIEAGVINKDDLSKSQCVLVYGQMNEPPGARARVALSALTVAEYFRDVENRDMLLFIDNIFRFTQAGSEVSALLGRIPSAVGYQPTLSTEMGELQERITSTQKGAITSVQAIYVPADDLTDPAPATAFAHLDATTVLNRKLTEIGIYPAVDPLDSTSRILDPNVVGKEHYAVARAVQETLQRYKDLQDIIAILGMDELSEDDKLTVARARKIQRFLSQPFTVAQQFTGNPGKYVELPDTIRGFKEIVDGKHDDLPEQAFYMVGGIEEAVEKAKKLTAG.

161–168 (GGAGVGKT) serves as a coordination point for ATP.

The protein belongs to the ATPase alpha/beta chains family. As to quaternary structure, F-type ATPases have 2 components, CF(1) - the catalytic core - and CF(0) - the membrane proton channel. CF(1) has five subunits: alpha(3), beta(3), gamma(1), delta(1), epsilon(1). CF(0) has three main subunits: a(1), b(2) and c(9-12). The alpha and beta chains form an alternating ring which encloses part of the gamma chain. CF(1) is attached to CF(0) by a central stalk formed by the gamma and epsilon chains, while a peripheral stalk is formed by the delta and b chains.

It is found in the cell inner membrane. It catalyses the reaction ATP + H2O + 4 H(+)(in) = ADP + phosphate + 5 H(+)(out). Produces ATP from ADP in the presence of a proton gradient across the membrane. The catalytic sites are hosted primarily by the beta subunits. This Anaeromyxobacter dehalogenans (strain 2CP-C) protein is ATP synthase subunit beta.